Consider the following 339-residue polypeptide: Anthranilate phosphoribosyltransferase (339 aa).

Residues Gly80, 83–84 (GD), Thr88, 90–93 (NIST), 108–116 (KHGNRSVSS), and Ser120 contribute to the 5-phospho-alpha-D-ribose 1-diphosphate site. Gly80 provides a ligand contact to anthranilate. Ser92 provides a ligand contact to Mg(2+). Asn111 lines the anthranilate pocket. Residue Arg166 participates in anthranilate binding. 2 residues coordinate Mg(2+): Asp225 and Glu226.

The protein belongs to the anthranilate phosphoribosyltransferase family. In terms of assembly, homodimer. Mg(2+) serves as cofactor.

It carries out the reaction N-(5-phospho-beta-D-ribosyl)anthranilate + diphosphate = 5-phospho-alpha-D-ribose 1-diphosphate + anthranilate. It functions in the pathway amino-acid biosynthesis; L-tryptophan biosynthesis; L-tryptophan from chorismate: step 2/5. Its function is as follows. Catalyzes the transfer of the phosphoribosyl group of 5-phosphorylribose-1-pyrophosphate (PRPP) to anthranilate to yield N-(5'-phosphoribosyl)-anthranilate (PRA). In Desulfosudis oleivorans (strain DSM 6200 / JCM 39069 / Hxd3) (Desulfococcus oleovorans), this protein is Anthranilate phosphoribosyltransferase.